The primary structure comprises 315 residues: Acetyl-coenzyme A carboxylase carboxyl transferase subunit alpha (315 aa).

One can recognise a CoA carboxyltransferase C-terminal domain in the interval 36–289 (LSKKRLELME…RKAVAAELKI (254 aa)).

The protein belongs to the AccA family. Acetyl-CoA carboxylase is a heterohexamer composed of biotin carboxyl carrier protein (AccB), biotin carboxylase (AccC) and two subunits each of ACCase subunit alpha (AccA) and ACCase subunit beta (AccD).

It localises to the cytoplasm. The catalysed reaction is N(6)-carboxybiotinyl-L-lysyl-[protein] + acetyl-CoA = N(6)-biotinyl-L-lysyl-[protein] + malonyl-CoA. The protein operates within lipid metabolism; malonyl-CoA biosynthesis; malonyl-CoA from acetyl-CoA: step 1/1. In terms of biological role, component of the acetyl coenzyme A carboxylase (ACC) complex. First, biotin carboxylase catalyzes the carboxylation of biotin on its carrier protein (BCCP) and then the CO(2) group is transferred by the carboxyltransferase to acetyl-CoA to form malonyl-CoA. This Francisella tularensis subsp. tularensis (strain FSC 198) protein is Acetyl-coenzyme A carboxylase carboxyl transferase subunit alpha.